The chain runs to 971 residues: 116 kDa U5 small nuclear ribonucleoprotein component (971 aa).

N-acetylmethionine is present on Met-1. Residues 1-52 are disordered; that stretch reads MDTDLYDEFGNYIGPELDSDEDDDELGRETKDLDEDEDEDEDDVGEHEDDHP. Over residues 17–47 the composition is skewed to acidic residues; sequence LDSDEDDDELGRETKDLDEDEDEDEDDVGEH. Ser-19 is subject to Phosphoserine. Residue Lys-63 forms a Glycyl lysine isopeptide (Lys-Gly) (interchain with G-Cter in SUMO1); alternate linkage. A Glycyl lysine isopeptide (Lys-Gly) (interchain with G-Cter in SUMO2); alternate cross-link involves residue Lys-63. A Phosphothreonine modification is found at Thr-85. Residues 126–408 enclose the tr-type G domain; it reads ELIRNVTLCG…GIHLTKEELK (283 aa). Residues 135 to 142, 203 to 207, and 257 to 260 each bind GTP; these read GHLHHGKT, DTPGH, and NKID.

The protein belongs to the TRAFAC class translation factor GTPase superfamily. Classic translation factor GTPase family. EF-G/EF-2 subfamily. As to quaternary structure, component of the U5 snRNP and the U4/U6-U5 tri-snRNP complex, a building block of the spliceosome. The U4/U6-U5 tri-snRNP complex is composed of the U4, U6 and U5 snRNAs and at least PRPF3, PRPF4, PRPF6, PRPF8, PRPF31, SNRNP200, TXNL4A, SNRNP40, DDX23, CD2BP2, PPIH, SNU13, EFTUD2, SART1 and USP39. Component of the pre-catalytic, catalytic and post-catalytic spliceosome complexes. Component of the minor spliceosome, which splices U12-type introns. Within this complex, interacts with CRIPT. Interacts with ERBB4 and PRPF8. Interacts with PIH1D1. Interacts with RPAP3 and URI1 in a ZNHIT2-dependent manner. Interacts with NRDE2. Interacts with FAM50A. Interacts with UBL5.

It localises to the nucleus. Its function is as follows. Required for pre-mRNA splicing as component of the spliceosome, including pre-catalytic, catalytic and post-catalytic spliceosomal complexes. Component of the U5 snRNP and the U4/U6-U5 tri-snRNP complex, a building block of the spliceosome. As a component of the minor spliceosome, involved in the splicing of U12-type introns in pre-mRNAs. The sequence is that of 116 kDa U5 small nuclear ribonucleoprotein component (Eftud2) from Mus musculus (Mouse).